Here is a 100-residue protein sequence, read N- to C-terminus: Integration host factor subunit alpha (100 aa).

This sequence belongs to the bacterial histone-like protein family. Heterodimer of an alpha and a beta chain.

Functionally, this protein is one of the two subunits of integration host factor, a specific DNA-binding protein that functions in genetic recombination as well as in transcriptional and translational control. The polypeptide is Integration host factor subunit alpha (Ectopseudomonas mendocina (strain ymp) (Pseudomonas mendocina)).